The primary structure comprises 418 residues: Serine hydroxymethyltransferase (418 aa).

Residues L121 and 125–127 (GHL) each bind (6S)-5,6,7,8-tetrahydrofolate. K230 is subject to N6-(pyridoxal phosphate)lysine. A (6S)-5,6,7,8-tetrahydrofolate-binding site is contributed by 355-357 (SPF).

Belongs to the SHMT family. Homodimer. Pyridoxal 5'-phosphate is required as a cofactor.

The protein resides in the cytoplasm. It carries out the reaction (6R)-5,10-methylene-5,6,7,8-tetrahydrofolate + glycine + H2O = (6S)-5,6,7,8-tetrahydrofolate + L-serine. Its pathway is one-carbon metabolism; tetrahydrofolate interconversion. It functions in the pathway amino-acid biosynthesis; glycine biosynthesis; glycine from L-serine: step 1/1. Its function is as follows. Catalyzes the reversible interconversion of serine and glycine with tetrahydrofolate (THF) serving as the one-carbon carrier. This reaction serves as the major source of one-carbon groups required for the biosynthesis of purines, thymidylate, methionine, and other important biomolecules. Also exhibits THF-independent aldolase activity toward beta-hydroxyamino acids, producing glycine and aldehydes, via a retro-aldol mechanism. This is Serine hydroxymethyltransferase from Streptococcus agalactiae serotype V (strain ATCC BAA-611 / 2603 V/R).